A 277-amino-acid chain; its full sequence is Anamorsin homolog 2 (277 aa).

The interval 1–141 is N-terminal SAM-like domain; it reads MDTQPIVLVI…RKPAWDTGSS (141 aa). The segment at 141–186 is linker; the sequence is SFKLKKKVAQKPANVVTFDIPAFKVQLGDDLDDLIDEDSLLTEEDL. [2Fe-2S] cluster is bound by residues C197, C207, C210, and C212. Residues 197–212 form a fe-S binding site A region; that stretch reads CEVGKAGRKACKNCTC. [4Fe-4S] cluster contacts are provided by C238, C241, C249, and C252. Short sequence motifs (cx2C motif) lie at residues 238–241 and 249–252; these read CGSC and CSTC. Positions 238–252 are fe-S binding site B; the sequence is CGSCGLGDAFRCSTC.

The protein belongs to the anamorsin family. As to quaternary structure, monomer. [2Fe-2S] cluster is required as a cofactor. Requires [4Fe-4S] cluster as cofactor.

It is found in the cytoplasm. The protein resides in the mitochondrion intermembrane space. Component of the cytosolic iron-sulfur (Fe-S) protein assembly (CIA) machinery. Required for the maturation of extramitochondrial Fe-S proteins. Part of an electron transfer chain functioning in an early step of cytosolic Fe-S biogenesis, facilitating the de novo assembly of a [4Fe-4S] cluster on the cytosolic Fe-S scaffold complex. Electrons are transferred from NADPH via a FAD- and FMN-containing diflavin oxidoreductase. Together with the diflavin oxidoreductase, also required for the assembly of the diferric tyrosyl radical cofactor of ribonucleotide reductase (RNR), probably by providing electrons for reduction during radical cofactor maturation in the catalytic small subunit. This chain is Anamorsin homolog 2, found in Picea sitchensis (Sitka spruce).